A 230-amino-acid polypeptide reads, in one-letter code: MTSDDRIKLEPSWKEALRDEFEQPYMAQLREFLRQEHAAGKEIYPPGPLIFNALNSTPLDNVKVVILGQDPYHGPNQAHGLCFSVQPGVPTPPSLVNIYKELKRDLNIDIPNHGCLQSWADQGVLMLNTTLTVERANAASHAGKGWQHFTDRIIQVVSEHQPHLVFLLWGAHAQGKQKLVDATKHLVLTSVHPSPLSAYKGFLGNGHFGRANKYLEQNGLAPIDWRLPAL.

The active-site Proton acceptor is Asp70.

Belongs to the uracil-DNA glycosylase (UDG) superfamily. UNG family.

It is found in the cytoplasm. The enzyme catalyses Hydrolyzes single-stranded DNA or mismatched double-stranded DNA and polynucleotides, releasing free uracil.. In terms of biological role, excises uracil residues from the DNA which can arise as a result of misincorporation of dUMP residues by DNA polymerase or due to deamination of cytosine. This is Uracil-DNA glycosylase from Pseudomonas syringae pv. tomato (strain ATCC BAA-871 / DC3000).